Consider the following 419-residue polypeptide: Equilibrative nucleotide transporter 5 (419 aa).

11 helical membrane-spanning segments follow: residues 20–40, 56–76, 86–106, 108–128, 142–162, 186–206, 265–285, 292–312, 327–347, 354–374, and 393–413; these read MVVCCILGIGSLVSWNSLLSV, VLTFVYQPFSIGTIVIFAYNE, LIGYIVFTTSIFLLIILDLAT, GHGGIGPYIVLCAIVGSFGFA, LMCPELIQSFVAGLAVAGALT, IFLAISTLVEFLCVLLYAYVF, YVVNLFLIYVLTLSILPGFLY, GLGSWYALVLIAMYNWWDLVG, KGLTVAVLTRFLLVPAFYFTA, WMILLVSILGLTNGHLTVCIL, and LVLFILWGAFVGCALGWLWLI.

This sequence belongs to the SLC29A/ENT transporter (TC 2.A.57) family.

The protein localises to the cell membrane. May be involved in nucleoside transport. This chain is Equilibrative nucleotide transporter 5 (ENT5), found in Arabidopsis thaliana (Mouse-ear cress).